Reading from the N-terminus, the 152-residue chain is Catabolic 3-dehydroquinase 1 (152 aa).

Tyr-24 functions as the Proton acceptor in the catalytic mechanism. Residues Asn-75, His-81, and Asp-88 each contribute to the substrate site. His-101 (proton donor) is an active-site residue. Substrate contacts are provided by residues 102–103 and Arg-112; that span reads VS.

It belongs to the type-II 3-dehydroquinase family. As to quaternary structure, homododecamer. Adopts a ring-like structure, composed of an arrangement of two hexameric rings stacked on top of one another.

It carries out the reaction 3-dehydroquinate = 3-dehydroshikimate + H2O. Its pathway is aromatic compound metabolism; 3,4-dihydroxybenzoate biosynthesis; 3,4-dihydroxybenzoate from 3-dehydroquinate: step 1/2. Its function is as follows. Is involved in the catabolism of quinate. Allows the utilization of quinate as carbon source via the beta-ketoadipate pathway. The protein is Catabolic 3-dehydroquinase 1 of Aspergillus terreus (strain NIH 2624 / FGSC A1156).